The sequence spans 425 residues: Serine--tRNA ligase (425 aa).

233–235 contacts L-serine; the sequence is TAE. Residue 264–266 coordinates ATP; the sequence is RRE. Glu287 provides a ligand contact to L-serine. 351–354 lines the ATP pocket; the sequence is EVSS. Residue Ser386 participates in L-serine binding.

It belongs to the class-II aminoacyl-tRNA synthetase family. Type-1 seryl-tRNA synthetase subfamily. Homodimer. The tRNA molecule binds across the dimer.

It is found in the cytoplasm. It carries out the reaction tRNA(Ser) + L-serine + ATP = L-seryl-tRNA(Ser) + AMP + diphosphate + H(+). It catalyses the reaction tRNA(Sec) + L-serine + ATP = L-seryl-tRNA(Sec) + AMP + diphosphate + H(+). It participates in aminoacyl-tRNA biosynthesis; selenocysteinyl-tRNA(Sec) biosynthesis; L-seryl-tRNA(Sec) from L-serine and tRNA(Sec): step 1/1. Its function is as follows. Catalyzes the attachment of serine to tRNA(Ser). Is also able to aminoacylate tRNA(Sec) with serine, to form the misacylated tRNA L-seryl-tRNA(Sec), which will be further converted into selenocysteinyl-tRNA(Sec). The chain is Serine--tRNA ligase from Thermosipho melanesiensis (strain DSM 12029 / CIP 104789 / BI429).